The primary structure comprises 161 residues: PRS fimbrial major pilin protein (161 aa).

This sequence belongs to the fimbrial protein family.

Its subcellular location is the secreted. The protein localises to the fimbrium. In terms of biological role, fimbriae (also called pili), polar filaments radiating from the surface of the bacterium to a length of 0.5-1.5 micrometers and numbering 100-300 per cell, enable bacteria to colonize the epithelium of specific host organs. The protein is PRS fimbrial major pilin protein (prsA) of Escherichia coli.